A 250-amino-acid polypeptide reads, in one-letter code: 1-(5-phosphoribosyl)-5-[(5-phosphoribosylamino)methylideneamino] imidazole-4-carboxamide isomerase (250 aa).

Asp12 (proton acceptor) is an active-site residue. Asp134 (proton donor) is an active-site residue.

Belongs to the HisA/HisF family.

Its subcellular location is the cytoplasm. The enzyme catalyses 1-(5-phospho-beta-D-ribosyl)-5-[(5-phospho-beta-D-ribosylamino)methylideneamino]imidazole-4-carboxamide = 5-[(5-phospho-1-deoxy-D-ribulos-1-ylimino)methylamino]-1-(5-phospho-beta-D-ribosyl)imidazole-4-carboxamide. Its pathway is amino-acid biosynthesis; L-histidine biosynthesis; L-histidine from 5-phospho-alpha-D-ribose 1-diphosphate: step 4/9. In Actinobacillus pleuropneumoniae serotype 3 (strain JL03), this protein is 1-(5-phosphoribosyl)-5-[(5-phosphoribosylamino)methylideneamino] imidazole-4-carboxamide isomerase.